The primary structure comprises 742 residues: G2/M phase-specific E3 ubiquitin-protein ligase (742 aa).

The C2HC pre-PHD-type zinc finger occupies 10–50; sequence SPPCVLCGWTDNCPEKYGEKRTYVEYNLTLHNYCLLMSSGI. The PHD-type 1 zinc finger occupies 78 to 127; the sequence is LMCNICRKKGASIGCVAPKCKRSYHFPCGLQKECVFQFMEDFRSYCWEHK. The PHD-type 2; degenerate zinc-finger motif lies at 142–192; it reads QCTICLDLVEHLPLYSVLRSPCCKNTWFHRECLQYQALSAGIFFFRCAVCN. Residues 236–285 form a PHD-type 3 zinc finger; that stretch reads RCLCKNGRDYNKPDSKWEIKRCQSCGSRGTHLACSSIKSWEQNWECVECR. Residues 417–742 form the HECT domain; it reads KGFRQRNFRP…IRSTLRGERE (326 aa).

The protein resides in the nucleus. It is found in the nucleolus. The protein localises to the cytoplasm. The enzyme catalyses S-ubiquitinyl-[E2 ubiquitin-conjugating enzyme]-L-cysteine + [acceptor protein]-L-lysine = [E2 ubiquitin-conjugating enzyme]-L-cysteine + N(6)-ubiquitinyl-[acceptor protein]-L-lysine.. It functions in the pathway protein modification; protein ubiquitination. In terms of biological role, E3 ubiquitin-protein ligase which accepts ubiquitin from an E2 ubiquitin-conjugating enzyme in the form of a thioester and then directly transfers the ubiquitin to targeted substrates. Essential in early embryonic development to prevent apoptotic death. In Gallus gallus (Chicken), this protein is G2/M phase-specific E3 ubiquitin-protein ligase (G2E3).